We begin with the raw amino-acid sequence, 270 residues long: Putative phosphoenolpyruvate synthase regulatory protein (270 aa).

Residue 150-157 (GVSRSGKT) coordinates ADP.

This sequence belongs to the pyruvate, phosphate/water dikinase regulatory protein family. PSRP subfamily.

It catalyses the reaction [pyruvate, water dikinase] + ADP = [pyruvate, water dikinase]-phosphate + AMP + H(+). The catalysed reaction is [pyruvate, water dikinase]-phosphate + phosphate + H(+) = [pyruvate, water dikinase] + diphosphate. Its function is as follows. Bifunctional serine/threonine kinase and phosphorylase involved in the regulation of the phosphoenolpyruvate synthase (PEPS) by catalyzing its phosphorylation/dephosphorylation. The polypeptide is Putative phosphoenolpyruvate synthase regulatory protein (Cupriavidus metallidurans (strain ATCC 43123 / DSM 2839 / NBRC 102507 / CH34) (Ralstonia metallidurans)).